A 425-amino-acid polypeptide reads, in one-letter code: Dihydroorotase (425 aa).

Zn(2+) is bound by residues His56 and His58. Substrate contacts are provided by residues 58 to 60 (HYR) and Asn90. The Zn(2+) site is built by Asp148, His175, and His228. Substrate is bound at residue Asn274. Position 301 (Asp301) interacts with Zn(2+). The active site involves Asp301. Residues His305 and 319–320 (FG) contribute to the substrate site.

The protein belongs to the metallo-dependent hydrolases superfamily. DHOase family. Class I DHOase subfamily. Zn(2+) serves as cofactor.

It catalyses the reaction (S)-dihydroorotate + H2O = N-carbamoyl-L-aspartate + H(+). It participates in pyrimidine metabolism; UMP biosynthesis via de novo pathway; (S)-dihydroorotate from bicarbonate: step 3/3. In terms of biological role, catalyzes the reversible cyclization of carbamoyl aspartate to dihydroorotate. The chain is Dihydroorotase from Lactobacillus johnsonii (strain CNCM I-12250 / La1 / NCC 533).